A 103-amino-acid chain; its full sequence is Large ribosomal subunit protein uL24 (103 aa).

This sequence belongs to the universal ribosomal protein uL24 family. In terms of assembly, part of the 50S ribosomal subunit.

Functionally, one of two assembly initiator proteins, it binds directly to the 5'-end of the 23S rRNA, where it nucleates assembly of the 50S subunit. One of the proteins that surrounds the polypeptide exit tunnel on the outside of the subunit. The sequence is that of Large ribosomal subunit protein uL24 from Dehalococcoides mccartyi (strain ATCC BAA-2266 / KCTC 15142 / 195) (Dehalococcoides ethenogenes (strain 195)).